A 493-amino-acid chain; its full sequence is Cobyric acid synthase (493 aa).

The 187-residue stretch at 255 to 441 (ELEIAVLRLP…LHGLLENGRW (187 aa)) folds into the GATase cobBQ-type domain. C336 serves as the catalytic Nucleophile. Residue H433 is part of the active site.

Belongs to the CobB/CobQ family. CobQ subfamily.

The protein operates within cofactor biosynthesis; adenosylcobalamin biosynthesis. Its function is as follows. Catalyzes amidations at positions B, D, E, and G on adenosylcobyrinic A,C-diamide. NH(2) groups are provided by glutamine, and one molecule of ATP is hydrogenolyzed for each amidation. The sequence is that of Cobyric acid synthase from Synechococcus sp. (strain RCC307).